The following is a 217-amino-acid chain: Small ribosomal subunit protein uS3 (217 aa).

The KH type-2 domain maps to 38–106 (IRKFVQKELA…QVHINIIEIK (69 aa)).

This sequence belongs to the universal ribosomal protein uS3 family. As to quaternary structure, part of the 30S ribosomal subunit. Forms a tight complex with proteins S10 and S14.

Binds the lower part of the 30S subunit head. Binds mRNA in the 70S ribosome, positioning it for translation. In Streptococcus gordonii (strain Challis / ATCC 35105 / BCRC 15272 / CH1 / DL1 / V288), this protein is Small ribosomal subunit protein uS3.